Here is a 424-residue protein sequence, read N- to C-terminus: UDP-N-acetylglucosamine 1-carboxyvinyltransferase (424 aa).

22-23 lines the phosphoenolpyruvate pocket; the sequence is KN. Arg-98 is a binding site for UDP-N-acetyl-alpha-D-glucosamine. The Proton donor role is filled by Cys-122. Cys-122 is subject to 2-(S-cysteinyl)pyruvic acid O-phosphothioketal. Residues 127-131, Asp-312, and Ile-334 contribute to the UDP-N-acetyl-alpha-D-glucosamine site; that span reads RPVDQ.

It belongs to the EPSP synthase family. MurA subfamily.

The protein localises to the cytoplasm. The enzyme catalyses phosphoenolpyruvate + UDP-N-acetyl-alpha-D-glucosamine = UDP-N-acetyl-3-O-(1-carboxyvinyl)-alpha-D-glucosamine + phosphate. It functions in the pathway cell wall biogenesis; peptidoglycan biosynthesis. In terms of biological role, cell wall formation. Adds enolpyruvyl to UDP-N-acetylglucosamine. This Xanthomonas campestris pv. campestris (strain B100) protein is UDP-N-acetylglucosamine 1-carboxyvinyltransferase.